A 179-amino-acid polypeptide reads, in one-letter code: Large ribosomal subunit protein uL5 (179 aa).

The protein belongs to the universal ribosomal protein uL5 family. In terms of assembly, part of the 50S ribosomal subunit; part of the 5S rRNA/L5/L18/L25 subcomplex. Contacts the 5S rRNA and the P site tRNA. Forms a bridge to the 30S subunit in the 70S ribosome.

In terms of biological role, this is one of the proteins that bind and probably mediate the attachment of the 5S RNA into the large ribosomal subunit, where it forms part of the central protuberance. In the 70S ribosome it contacts protein S13 of the 30S subunit (bridge B1b), connecting the 2 subunits; this bridge is implicated in subunit movement. Contacts the P site tRNA; the 5S rRNA and some of its associated proteins might help stabilize positioning of ribosome-bound tRNAs. This is Large ribosomal subunit protein uL5 from Prochlorococcus marinus (strain MIT 9313).